The chain runs to 391 residues: Phosphoglycerate kinase (391 aa).

Residues 21-23, Arg-36, 59-62, Arg-113, and Arg-146 each bind substrate; these read DLN and HLGR. ATP contacts are provided by residues Lys-197, Glu-319, and 345–348; that span reads GGDT.

Belongs to the phosphoglycerate kinase family. As to quaternary structure, monomer.

Its subcellular location is the cytoplasm. It catalyses the reaction (2R)-3-phosphoglycerate + ATP = (2R)-3-phospho-glyceroyl phosphate + ADP. It participates in carbohydrate degradation; glycolysis; pyruvate from D-glyceraldehyde 3-phosphate: step 2/5. In Xylella fastidiosa (strain Temecula1 / ATCC 700964), this protein is Phosphoglycerate kinase.